A 430-amino-acid chain; its full sequence is 4-hydroxy-3-methylbut-2-en-1-yl diphosphate synthase (flavodoxin) (430 aa).

[4Fe-4S] cluster-binding residues include Cys310, Cys313, Cys356, and Glu363.

The protein belongs to the IspG family. The cofactor is [4Fe-4S] cluster.

The enzyme catalyses (2E)-4-hydroxy-3-methylbut-2-enyl diphosphate + oxidized [flavodoxin] + H2O + 2 H(+) = 2-C-methyl-D-erythritol 2,4-cyclic diphosphate + reduced [flavodoxin]. It functions in the pathway isoprenoid biosynthesis; isopentenyl diphosphate biosynthesis via DXP pathway; isopentenyl diphosphate from 1-deoxy-D-xylulose 5-phosphate: step 5/6. Its function is as follows. Converts 2C-methyl-D-erythritol 2,4-cyclodiphosphate (ME-2,4cPP) into 1-hydroxy-2-methyl-2-(E)-butenyl 4-diphosphate. The sequence is that of 4-hydroxy-3-methylbut-2-en-1-yl diphosphate synthase (flavodoxin) from Nitrobacter winogradskyi (strain ATCC 25391 / DSM 10237 / CIP 104748 / NCIMB 11846 / Nb-255).